The following is an 872-amino-acid chain: Protein translocase subunit SecA (872 aa).

ATP contacts are provided by residues glutamine 87, 105–109 (GEGKT), and aspartate 500. Positions 855, 857, 866, and 867 each coordinate Zn(2+).

It belongs to the SecA family. As to quaternary structure, monomer and homodimer. Part of the essential Sec protein translocation apparatus which comprises SecA, SecYEG and auxiliary proteins SecDF-YajC and YidC. The cofactor is Zn(2+).

It localises to the cell inner membrane. It is found in the cytoplasm. It catalyses the reaction ATP + H2O + cellular proteinSide 1 = ADP + phosphate + cellular proteinSide 2.. Functionally, part of the Sec protein translocase complex. Interacts with the SecYEG preprotein conducting channel. Has a central role in coupling the hydrolysis of ATP to the transfer of proteins into and across the cell membrane, serving both as a receptor for the preprotein-SecB complex and as an ATP-driven molecular motor driving the stepwise translocation of polypeptide chains across the membrane. The sequence is that of Protein translocase subunit SecA from Anaplasma marginale (strain St. Maries).